Reading from the N-terminus, the 105-residue chain is RxLR effector protein PITG_18670 (105 aa).

Positions 1 to 21 are cleaved as a signal peptide; it reads MRSIFYFALAFAALTCSNASA. Positions 39 to 57 match the RxLR-dEER motif; sequence RSLRVAGQEVARGDRGEEI.

The protein belongs to the RxLR effector family.

The protein resides in the secreted. It localises to the host nucleus. Its subcellular location is the host nucleolus. It is found in the host cytoplasm. Effector that enhances P.infestans colonization of Nicotiana benthamiana leaves. The protein is RxLR effector protein PITG_18670 of Phytophthora infestans (strain T30-4) (Potato late blight agent).